We begin with the raw amino-acid sequence, 513 residues long: MAAPIWMASPPEVHSALLSNGPGPGSLVAAATAWSQLSAEYASTAAELSGLLGAVPGWAWQGPSAEWYVAAHLPYVAWLTQASADAAGAAAQHEAAAAAYTTALAAMPTLAELAANHVIHTVLVATNFFGINTIPITLNEADYVRMWLQAAAVMGLYQAASGAALASAPRTVPAPTVMNPGGGAASTVGAVNPWQWLLALLQQLWNAYTGFYGWMLQLIWQFLQDPIGNSIKIIIAFLTNPIQALITYGPLLFALGYQIFFNLVGWPTWGMILSSPFLLPAGLGLGLAAIAFLPIVLAPAVIPPASTPLAAAAVAAGSVWPAVSMAVTGAGTAGAATPAAGAAPSAGAAPAPAAPATASFAYAVGGSGDWGPSLGPTVGGRGGIKAPAATVPAAAAAAATRGQSRARRRRRSELRDYGDEFLDMDSDSGFGPSTGDHGAQASERGAGTLGFAGTATKERRVRAVGLTALAGDEFGNGPRMPMVPGTWEQGSNEPEAPDGSGRGGGDGLPHDSK.

Helical transmembrane passes span 233 to 253 (IIIA…PLLF), 277 to 297 (FLLP…PIVL), and 309 to 329 (LAAA…AVTG). Disordered stretches follow at residues 395–446 (AAAA…ERGA) and 469–513 (LAGD…HDSK).

It belongs to the mycobacterial PPE family.

The protein localises to the cell membrane. Functionally, important for the siderophore-mediated iron-acquisition function of ESX-3. This chain is PPE family protein PPE4 (PPE4), found in Mycobacterium tuberculosis (strain CDC 1551 / Oshkosh).